The primary structure comprises 149 residues: Deoxyuridine 5'-triphosphate nucleotidohydrolase (149 aa).

Substrate is bound by residues 68-70, Asn81, 85-87, and Met95; these read RSG and LID.

This sequence belongs to the dUTPase family. Mg(2+) serves as cofactor.

The enzyme catalyses dUTP + H2O = dUMP + diphosphate + H(+). The protein operates within pyrimidine metabolism; dUMP biosynthesis; dUMP from dCTP (dUTP route): step 2/2. Its function is as follows. This enzyme is involved in nucleotide metabolism: it produces dUMP, the immediate precursor of thymidine nucleotides and it decreases the intracellular concentration of dUTP so that uracil cannot be incorporated into DNA. This Polynucleobacter asymbioticus (strain DSM 18221 / CIP 109841 / QLW-P1DMWA-1) (Polynucleobacter necessarius subsp. asymbioticus) protein is Deoxyuridine 5'-triphosphate nucleotidohydrolase.